Here is a 256-residue protein sequence, read N- to C-terminus: Small ribosomal subunit protein eS1 (256 aa).

Ala2 carries the post-translational modification N-acetylalanine; partial.

It belongs to the eukaryotic ribosomal protein eS1 family. In terms of assembly, component of the small ribosomal subunit. Mature ribosomes consist of a small (40S) and a large (60S) subunit. The 40S subunit contains about 33 different proteins and 1 molecule of RNA (18S). The 60S subunit contains about 49 different proteins and 3 molecules of RNA (25S, 5.8S and 5S).

It is found in the cytoplasm. This Fusarium vanettenii (strain ATCC MYA-4622 / CBS 123669 / FGSC 9596 / NRRL 45880 / 77-13-4) (Fusarium solani subsp. pisi) protein is Small ribosomal subunit protein eS1.